A 279-amino-acid polypeptide reads, in one-letter code: uncharacterized protein (279 aa).

Helical transmembrane passes span 29–49 (PYNM…ALVF), 77–97 (VLYA…GTSL), 105–125 (WTKM…IIVT), 147–167 (VLGI…TGAV), 186–206 (TIGP…AIAF), and 240–260 (PIAG…VEMV).

The protein belongs to the DcuC/DcuD transporter (TC 2.A.61) family.

It is found in the cell membrane. This is an uncharacterized protein from Haemophilus influenzae (strain ATCC 51907 / DSM 11121 / KW20 / Rd).